Consider the following 397-residue polypeptide: Lysophospholipid transporter LplT (397 aa).

Topologically, residues M1–K17 are periplasmic. A helical transmembrane segment spans residues A18 to L38. The Cytoplasmic portion of the chain corresponds to A39–P52. Residues I53–A73 traverse the membrane as a helical segment. Residues D74–L90 are Periplasmic-facing. Residues L91 to V111 traverse the membrane as a helical segment. At G112 to T144 the chain is on the cytoplasmic side. The chain crosses the membrane as a helical span at residues I145–V165. Position 166 (A166) is a topological domain, periplasmic. Residues L167 to L187 traverse the membrane as a helical segment. At A188–S226 the chain is on the cytoplasmic side. The helical transmembrane segment at L227–L247 threads the bilayer. Topologically, residues G248 to T256 are periplasmic. A helical membrane pass occupies residues Y257–V277. Topologically, residues T278–E280 are cytoplasmic. A helical transmembrane segment spans residues T281–L301. Over Q302–E304 the chain is Periplasmic. Residues L305–P325 form a helical membrane-spanning segment. Residues L326–A343 are Cytoplasmic-facing. Residues I344–L364 form a helical membrane-spanning segment. At A365 to V366 the chain is on the periplasmic side. A helical membrane pass occupies residues M367–I387. Residues T388–H397 lie on the Cytoplasmic side of the membrane.

It belongs to the major facilitator superfamily. LplT (TC 2.A.1.42) family.

It is found in the cell inner membrane. Catalyzes the facilitated diffusion of 2-acyl-glycero-3-phosphoethanolamine (2-acyl-GPE) into the cell. The sequence is that of Lysophospholipid transporter LplT from Escherichia coli O8 (strain IAI1).